The sequence spans 522 residues: Sorting nexin-1 (522 aa).

Disordered regions lie at residues 1–89 (MASG…QDLF) and 115–142 (SLPP…QEDQ). Residues Ser32 and Ser39 each carry the phosphoserine modification. Residues 35-45 (EAGDSDTEGED) are compositionally biased toward acidic residues. 2 positions are modified to phosphothreonine: Thr41 and Thr48. A phosphoserine mark is found at Ser58 and Ser72. A compositionally biased stretch (polar residues) spans 60-73 (KRTTSLLPINNGSK). Positions 132 to 142 (EELEEEEQEDQ) are enriched in acidic residues. One can recognise a PX domain in the interval 143–272 (FDLTVGITDP…EFLEKEELPR (130 aa)). A 1,2-diacyl-sn-glycero-3-phospho-(1D-myo-inositol-3-phosphate) contacts are provided by Arg186, Ser188, and Lys214. Ser188 carries the phosphoserine modification. Residue Lys237 is modified to N6-acetyllysine. Position 238 (Arg238) interacts with a 1,2-diacyl-sn-glycero-3-phospho-(1D-myo-inositol-3-phosphate). Ser280 is subject to Phosphoserine. Positions 281–298 (GAGLLKMFNKATDAVSKM) are membrane-binding amphipathic helix. A BAR domain is found at 302-522 (MNESDIWFEE…AFLPEAKAIS (221 aa)).

It belongs to the sorting nexin family. As to quaternary structure, predominantly forms heterodimers with BAR domain-containing sorting nexins SNX5, SNX6 and SNX32; can self-associate to form homodimers. The heterodimers are proposed to self-assemble into helical arrays on the membrane to stabilize and expand local membrane curvature underlying endosomal tubule formation. Thought to be a component of the originally described retromer complex (also called SNX-BAR retromer) which is a pentamer containing the heterotrimeric retromer cargo-selective complex (CSC), also described as vacuolar protein sorting subcomplex (VPS) and a heterodimeric membrane-deforming subcomplex formed between SNX1 or SNX2 and SNX5 or SNX6 (also called SNX-BAR subcomplex); the respective CSC and SNX-BAR subcomplexes associate with low affinity. Interacts with SNX5, SNX6, SNX32, VPS26A, VPS29, VPS35, DRD5, DENND5A, KALRN, RHOG (GDP-bound form). The interaction with SNX2 is reported controversially. Interacts with DNAJC13; prevented by presence of HGS. Interacts with HGS.

Its subcellular location is the endosome membrane. The protein localises to the golgi apparatus. It localises to the trans-Golgi network membrane. The protein resides in the early endosome membrane. It is found in the cell projection. Its subcellular location is the lamellipodium. In terms of biological role, involved in several stages of intracellular trafficking. Interacts with membranes containing phosphatidylinositol 3-phosphate (PtdIns(3P)) or phosphatidylinositol 3,5-bisphosphate (PtdIns(3,5)P2). Acts in part as component of the retromer membrane-deforming SNX-BAR subcomplex. The SNX-BAR retromer mediates retrograde transport of cargo proteins from endosomes to the trans-Golgi network (TGN) and is involved in endosome-to-plasma membrane transport for cargo protein recycling. The SNX-BAR subcomplex functions to deform the donor membrane into a tubular profile called endosome-to-TGN transport carrier (ETC). Can sense membrane curvature and has in vitro vesicle-to-membrane remodeling activity. Involved in retrograde endosome-to-TGN transport of lysosomal enzyme receptors (IGF2R, M6PR and SORT1). Plays a role in targeting ligand-activated EGFR to the lysosomes for degradation after endocytosis from the cell surface and release from the Golgi. Involvement in retromer-independent endocytic trafficking of P2RY1 and lysosomal degradation of protease-activated receptor-1/F2R. Promotes KALRN- and RHOG-dependent but retromer-independent membrane remodeling such as lamellipodium formation; the function is dependent on GEF activity of KALRN. Required for endocytosis of DRD5 upon agonist stimulation but not for basal receptor trafficking. The protein is Sorting nexin-1 (SNX1) of Macaca fascicularis (Crab-eating macaque).